Here is a 94-residue protein sequence, read N- to C-terminus: Neutrophil defensin 6 (94 aa).

Positions 1 to 19 are cleaved as a signal peptide; that stretch reads MRTIAILAAILLFALLAQA. Residues 20-61 constitute a propeptide that is removed on maturation; that stretch reads KSLQETADEAATQEQPGEDDQDLAVSFEENGLSTLRASGSQA. 3 disulfide bridges follow: Cys-65-Cys-93, Cys-67-Cys-82, and Cys-72-Cys-92.

The protein belongs to the alpha-defensin family.

The protein resides in the secreted. Defensins 6 and 7 have bacteriostatic activity against Gram-positive bacteria S.aureus and L.monocytogenes and Gram-negative bacterium E.coli and antifungal activity against C.neoformans. Defensin 7 has microbicidial activity against Gram-positive bacteria S.aureus and L.monocytogenes. The polypeptide is Neutrophil defensin 6 (Macaca mulatta (Rhesus macaque)).